We begin with the raw amino-acid sequence, 273 residues long: Protein PERCC1 (273 aa).

Disordered stretches follow at residues 18–84 and 253–273; these read SHES…PETP and GGSE…LAEV. Positions 28 to 56 are enriched in acidic residues; sequence EAPEISEEEEEEEEEEEEEEEEEEVDQDQ. The span at 67–83 shows a compositional bias: polar residues; it reads DSQSSGVVPQDPSSPET.

Specifically expressed in the stomach, pancreas and intestine. In gastrointestinal tissue, expression is primarily restricted to gastric G cells and duodenal enteroendocrine cells (EECs).

Its function is as follows. Plays a critical role in intestinal function by promoting the development of enteroendocrine cells (EECs) of the gastrointestinal tract and pancreas. It is thereby required for normal enteroendocrine peptide hormone secretion. In Mus musculus (Mouse), this protein is Protein PERCC1.